The following is a 1145-amino-acid chain: MCSWRCAAARSHASANRCTPKERLGRQENRSAHCPGTIRSIRMEWSRWERQEFRCKRSFQRLGSSCEQFSPPMQNRRWEIERLPWRFSPVGKPFHFRDNVRAMRYVELHCRSNFSFLDGASHPDELVQRAAELGYEGLAITDRESIAGVVRGFSPAQELGLQYIVGTEVHPTDAPPMVLWPTDRAAYGRMCRMLSTGRMRCEKGRCELSFEDIAEHAQGILAGVIATDESRSIEDQHAHVNDSRQFLRGPFRDVFDDRGYLLASFHRGVDDAAKATWLRNLSLATDVPLLACGDVRYHSAERMALHDCVVAISQGKSVEQIQSDRLVNSQHHLRSLEEIAELYRDVPDAVARTIEVAQRCTFTLDQLKYEYPVELAPEGMTPIEHLKRLTWEGARGRWPNGVPEKVIETLRHEVTLIEDLQYEAYFLTVWDLVRFARSQEILCQGRGSAANSVVCYCLGITSVDPTHTDLLFERFISRERGEAPDIDVDFEHQRREEVLQYLYEKYGRDRAGMTAVVTCYRAKSAIREVGKALAISPDIIDAVAKLAGSYSRNPELPERCRDAGLDPDTPLGRRFLYLTETLIGFPRHLSQHVGGMVMTAGSLCELCVTENAAMPGRSVIQWNKDDLDDIGILKVDILALGMLSAIRRCFELVKDHHNRELSLSTIPPDDTPTYDMICAADTMGVFQIESRAQMSMLPRLKPRCYYDLVIEVAIVRPGPIQGNMVHPFLAARENPAAAKYPNDAIRKVLEKTLGVPIFQEQAMKLAVVAAGFTPGEADQLRRAMAAWRRPGVIDRFRTKLLEGMKANGLNGEFAENVFRQIRGFGEYGFPESHAASFALLVYASCYLKRHYPTAFCAALLDSQPMGFYAPAQLIRDAQQHGVQVLPVDINDSNIRSKLIPDLNRPHPKLRLGLQMVRGLPSAVAQKIIVARDANGPFANLHDLTTRAKLSRSNIATLADADALASIAQDRRAAVWQSLAQDDSGDSMPLLADLEPDCSVPEELVPMSPAEEVKNDYATTGLSLKAHPVSFWRDDLNALRCKRASDLPKLRDGVHVRVAGLVLMRQRPGTAKGITFVTMEDETGSMNLVLFAQVWKRFFKIARGSDAWIVDGKLENKKGVIHVIVGRVEDLSEKASGLKVPRRDFR.

It belongs to the DNA polymerase type-C family. DnaE2 subfamily.

The protein resides in the cytoplasm. It carries out the reaction DNA(n) + a 2'-deoxyribonucleoside 5'-triphosphate = DNA(n+1) + diphosphate. DNA polymerase involved in damage-induced mutagenesis and translesion synthesis (TLS). It is not the major replicative DNA polymerase. In Rhodopirellula baltica (strain DSM 10527 / NCIMB 13988 / SH1), this protein is Error-prone DNA polymerase.